The following is a 214-amino-acid chain: Insulin-like growth factor 2 (214 aa).

Residues 48 to 79 (EVASAETLCGGELVDALQFVCEDRGFYFSRPT) are b. Intrachain disulfides connect Cys56–Cys97, Cys68–Cys110, and Cys96–Cys101. Positions 80 to 90 (SRSNSRRSQNR) are c. Residues 91–111 (GIVEECCFRSCDLNLLEQYCA) are a. The d stretch occupies residues 112-117 (KPAKSE). The propeptide at 118-214 (RDVSATSLQI…PPTDNYVSHN (97 aa)) is e peptide.

It belongs to the insulin family.

Its subcellular location is the secreted. Functionally, the insulin-like growth factors, isolated from plasma, are structurally and functionally related to insulin but have a much higher growth-promoting activity. Acts as a ligand for integrin which is required for IGF2 signaling. The polypeptide is Insulin-like growth factor 2 (Oncorhynchus mykiss (Rainbow trout)).